A 236-amino-acid chain; its full sequence is uncharacterized protein (236 aa).

Positions 1 to 29 (MKGGDKMKKLILLMLLLPISLIGCTDEES) are cleaved as a signal peptide.

This is an uncharacterized protein from Archaeoglobus fulgidus (strain ATCC 49558 / DSM 4304 / JCM 9628 / NBRC 100126 / VC-16).